The primary structure comprises 92 residues: Small ribosomal subunit protein uS19c (92 aa).

This sequence belongs to the universal ribosomal protein uS19 family.

Its subcellular location is the plastid. Protein S19 forms a complex with S13 that binds strongly to the 16S ribosomal RNA. The polypeptide is Small ribosomal subunit protein uS19c (Cuscuta obtusiflora (Peruvian dodder)).